Consider the following 468-residue polypeptide: ATP synthase subunit beta (468 aa).

155–162 (GGAGVGKT) is a binding site for ATP.

It belongs to the ATPase alpha/beta chains family. In terms of assembly, F-type ATPases have 2 components, CF(1) - the catalytic core - and CF(0) - the membrane proton channel. CF(1) has five subunits: alpha(3), beta(3), gamma(1), delta(1), epsilon(1). CF(0) has three main subunits: a(1), b(2) and c(9-12). The alpha and beta chains form an alternating ring which encloses part of the gamma chain. CF(1) is attached to CF(0) by a central stalk formed by the gamma and epsilon chains, while a peripheral stalk is formed by the delta and b chains.

The protein localises to the cell membrane. The catalysed reaction is ATP + H2O + 4 H(+)(in) = ADP + phosphate + 5 H(+)(out). Functionally, produces ATP from ADP in the presence of a proton gradient across the membrane. The catalytic sites are hosted primarily by the beta subunits. The sequence is that of ATP synthase subunit beta from Streptococcus pneumoniae (strain CGSP14).